Here is a 184-residue protein sequence, read N- to C-terminus: uncharacterized protein (184 aa).

Belongs to the PhzF family.

It is found in the cytoplasm. Its subcellular location is the nucleus. This is an uncharacterized protein from Schizosaccharomyces pombe (strain 972 / ATCC 24843) (Fission yeast).